The chain runs to 874 residues: Cyanophycin synthetase (874 aa).

Positions 224 to 480 (KTTLAEAGIP…VAAPVIDMLF (257 aa)) constitute an ATP-grasp domain. 495 to 501 (GTNGKTT) is an ATP binding site.

This sequence in the C-terminal section; belongs to the MurCDEF family. In terms of assembly, homodimer.

It carries out the reaction [L-4-(L-arginin-2-N-yl)aspartate](n) + L-aspartate + ATP = [L-4-(L-arginin-2-N-yl)aspartate](n)-L-aspartate + ADP + phosphate + H(+). The catalysed reaction is [L-4-(L-arginin-2-N-yl)aspartate](n)-L-aspartate + L-arginine + ATP = [L-4-(L-arginin-2-N-yl)aspartate](n+1) + ADP + phosphate + H(+). Catalyzes the ATP-dependent polymerization of arginine and aspartate to multi-L-arginyl-poly-L-aspartic acid (cyanophycin; a water-insoluble reserve polymer). This chain is Cyanophycin synthetase (cphA), found in Geminocystis herdmanii (strain PCC 6308) (Synechocystis sp. (strain PCC 6308)).